We begin with the raw amino-acid sequence, 158 residues long: Protein BTG2 (158 aa).

At Ser-147 the chain carries Phosphoserine; by MAPK1 and MAPK3. Ser-149 is modified (phosphoserine; by MAPK14).

It belongs to the BTG family. Interacts with PRKCABP. Interacts with CNOT7 and CNOT8; indicative for an association with the CCR4-NOT complex. Interacts with PIN1, inducing mitochondrial depolarization. In terms of processing, phosphorylated at Ser-147 by MAPK1/ERK2 and MAPK3/ERK1, and at Ser-149 by MAPK14, leading to PIN1-binding and mitochondrial depolarization. As to expression, in brain at embryonic day 13.5, placenta, amnion, and spleen, which are proliferating and/or differentiating.

In terms of biological role, anti-proliferative protein; the function is mediated by association with deadenylase subunits of the CCR4-NOT complex. Activates mRNA deadenylation in a CNOT6 and CNOT7-dependent manner. In vitro can inhibit deadenylase activity of CNOT7 and CNOT8. Involved in cell cycle regulation. Could be involved in the growth arrest and differentiation of the neuronal precursors. Modulates transcription regulation mediated by ESR1. Involved in mitochondrial depolarization and neurite outgrowth. The sequence is that of Protein BTG2 (Btg2) from Rattus norvegicus (Rat).